Here is a 642-residue protein sequence, read N- to C-terminus: Epithelial sodium channel subunit alpha (642 aa).

The Cytoplasmic segment spans residues 1-81 (MHQVVTVKAE…VCSKRNKMKT (81 aa)). A helical membrane pass occupies residues 82-102 (AFWSVLFFLTFGLMYWQFGIL). At 103 to 553 (YREYFSFPVN…NQWSLWFGSS (451 aa)) the chain is on the extracellular side. Cystine bridges form between cysteine 130–cysteine 297, cysteine 222–cysteine 229, cysteine 274–cysteine 281, cysteine 385–cysteine 470, cysteine 407–cysteine 447, cysteine 407–cysteine 466, cysteine 411–cysteine 462, cysteine 420–cysteine 447, cysteine 420–cysteine 470, and cysteine 422–cysteine 436. The tract at residues 170–209 (GAAQSSQKRSQRSLSHHVQRHPLRRRKRNEPVSLKGNSPP) is disordered. The span at 178 to 197 (RSQRSLSHHVQRHPLRRRKR) shows a compositional bias: basic residues. Residues 554-574 (VLSVVELAELILDFIAITIIL) traverse the membrane as a helical segment. Residues 575–642 (SFKRFRSRQV…RDGEAVIGLE (68 aa)) are Cytoplasmic-facing. The tract at residues 587-608 (PSVPPPGAHDNTAFQSEPADPS) is disordered.

This sequence belongs to the amiloride-sensitive sodium channel (TC 1.A.6) family. SCNN1A subfamily. As to quaternary structure, heterotrimer; disulfide-linked and containing an alpha/SCNN1A, a beta/SCNN1B and a gamma/SCNN1G subunit.

It localises to the apical cell membrane. The protein resides in the cell projection. It is found in the cilium. The protein localises to the cytoplasmic granule. Its subcellular location is the cytoplasm. It localises to the cytoplasmic vesicle. The protein resides in the secretory vesicle. It is found in the acrosome. The protein localises to the flagellum. The catalysed reaction is Na(+)(in) = Na(+)(out). Its activity is regulated as follows. Originally identified and characterized by its inhibition by the diuretic drug amiloride. In terms of biological role, this is one of the three pore-forming subunits of the heterotrimeric epithelial sodium channel (ENaC), a critical regulator of sodium balance and fluid homeostasis. ENaC operates in epithelial tissues, where it mediates the electrodiffusion of sodium ions from extracellular fluid through the apical membrane of cells, with water following osmotically. In Pelodiscus sinensis (Chinese softshell turtle), this protein is Epithelial sodium channel subunit alpha.